The primary structure comprises 232 residues: Protein INAPERTURATE POLLEN 1 homolog (232 aa).

As to quaternary structure, interacts with LECRKS7/DAF1.

Its subcellular location is the cytoplasm. Its function is as follows. Required for pollen aperture formation, male fertility and LECRKS7/DAF1 function. Seems to be involved in operculum protrusion. Participates in the modification of plasma membrane at future aperture sites, possibly by creating close contact between the plasma membrane and callose wall to prevent primexine formation and sporopollenin deposition. The polypeptide is Protein INAPERTURATE POLLEN 1 homolog (Oryza sativa subsp. japonica (Rice)).